The chain runs to 279 residues: Dihydropteroate synthase type-1 (279 aa).

Positions 1–258 (MVTVFGILNL…APGDLRSAIT (258 aa)) constitute a Pterin-binding domain. N9 contributes to the Mg(2+) binding site. (7,8-dihydropterin-6-yl)methyl diphosphate is bound by residues D82, N101, D173, K212, and 246-248 (RTH).

The protein belongs to the DHPS family. In terms of assembly, homodimer or homotrimer. Requires Mg(2+) as cofactor.

The enzyme catalyses (7,8-dihydropterin-6-yl)methyl diphosphate + 4-aminobenzoate = 7,8-dihydropteroate + diphosphate. It functions in the pathway cofactor biosynthesis; tetrahydrofolate biosynthesis; 7,8-dihydrofolate from 2-amino-4-hydroxy-6-hydroxymethyl-7,8-dihydropteridine diphosphate and 4-aminobenzoate: step 1/2. In terms of biological role, catalyzes the condensation of para-aminobenzoate (pABA) with 6-hydroxymethyl-7,8-dihydropterin diphosphate (DHPt-PP) to form 7,8-dihydropteroate (H2Pte), the immediate precursor of folate derivatives. The polypeptide is Dihydropteroate synthase type-1 (sulI) (Corynebacterium glutamicum (Brevibacterium saccharolyticum)).